The sequence spans 1420 residues: DNA-directed RNA polymerase subunit beta' (1420 aa).

Cys71, Cys73, Cys86, and Cys89 together coordinate Zn(2+). Asp461, Asp463, and Asp465 together coordinate Mg(2+). Residues Cys815, Cys889, Cys896, and Cys899 each contribute to the Zn(2+) site.

This sequence belongs to the RNA polymerase beta' chain family. As to quaternary structure, the RNAP catalytic core consists of 2 alpha, 1 beta, 1 beta' and 1 omega subunit. When a sigma factor is associated with the core the holoenzyme is formed, which can initiate transcription. Mg(2+) serves as cofactor. The cofactor is Zn(2+).

The catalysed reaction is RNA(n) + a ribonucleoside 5'-triphosphate = RNA(n+1) + diphosphate. In terms of biological role, DNA-dependent RNA polymerase catalyzes the transcription of DNA into RNA using the four ribonucleoside triphosphates as substrates. This chain is DNA-directed RNA polymerase subunit beta', found in Haemophilus ducreyi (strain 35000HP / ATCC 700724).